The primary structure comprises 173 residues: 3-hydroxydecanoyl-[acyl-carrier-protein] dehydratase (173 aa).

H71 is a catalytic residue.

Belongs to the thioester dehydratase family. FabA subfamily. In terms of assembly, homodimer.

Its subcellular location is the cytoplasm. It catalyses the reaction a (3R)-hydroxyacyl-[ACP] = a (2E)-enoyl-[ACP] + H2O. The enzyme catalyses (3R)-hydroxydecanoyl-[ACP] = (2E)-decenoyl-[ACP] + H2O. The catalysed reaction is (2E)-decenoyl-[ACP] = (3Z)-decenoyl-[ACP]. Its pathway is lipid metabolism; fatty acid biosynthesis. Its function is as follows. Necessary for the introduction of cis unsaturation into fatty acids. Catalyzes the dehydration of (3R)-3-hydroxydecanoyl-ACP to E-(2)-decenoyl-ACP and then its isomerization to Z-(3)-decenoyl-ACP. Can catalyze the dehydratase reaction for beta-hydroxyacyl-ACPs with saturated chain lengths up to 16:0, being most active on intermediate chain length. In Baumannia cicadellinicola subsp. Homalodisca coagulata, this protein is 3-hydroxydecanoyl-[acyl-carrier-protein] dehydratase.